A 148-amino-acid chain; its full sequence is MRLNDVKPQKGSKKRRRRVGRGISAGQGASAGLGMRGQKSRSGSGTRPGFEGGQQPLYRRIPKLKGFPVVNRKIYTTINVEKLADLPANTEVTLESLRASGILTAVKGPLKVLGNGDLGVALNVKAAAFTGQARSKIEAAGGSCEVLG.

The interval 1-57 (MRLNDVKPQKGSKKRRRRVGRGISAGQGASAGLGMRGQKSRSGSGTRPGFEGGQQPL) is disordered. Basic residues predominate over residues 10–20 (KGSKKRRRRVG). Residues 23 to 35 (ISAGQGASAGLGM) show a composition bias toward gly residues.

The protein belongs to the universal ribosomal protein uL15 family. Part of the 50S ribosomal subunit.

Its function is as follows. Binds to the 23S rRNA. This Trichormus variabilis (strain ATCC 29413 / PCC 7937) (Anabaena variabilis) protein is Large ribosomal subunit protein uL15.